We begin with the raw amino-acid sequence, 85 residues long: Large ribosomal subunit protein bL31 (85 aa).

The interval 64 to 85 (KYGMSESQGAGGKGNAKKKDEK) is disordered.

Belongs to the bacterial ribosomal protein bL31 family. Type A subfamily. In terms of assembly, part of the 50S ribosomal subunit.

Its function is as follows. Binds the 23S rRNA. In Acaryochloris marina (strain MBIC 11017), this protein is Large ribosomal subunit protein bL31.